Here is a 94-residue protein sequence, read N- to C-terminus: Ferredoxin-like protein (94 aa).

4Fe-4S ferredoxin-type domains are found at residues 20–52 and 53–83; these read PHIRIKDPDHCTELSEKQCTVCCPAGCYTRETN and GKVTLVTDGCLECGTCRIICQDSGNLEWEWP.

The protein to ferredoxins from P.putida and C.tartarivorum, ferredoxin I from A.vinelandii, ferredoxin II from D.desulfuricans.

Functionally, could be a 3Fe-4S cluster-containing protein. The sequence is that of Ferredoxin-like protein (fixX) from Azotobacter vinelandii.